We begin with the raw amino-acid sequence, 64 residues long: Disintegrin lebein-1-beta (64 aa).

Residues 1–64 (NSGNPCCDPV…SDCPRNPYKD (64 aa)) form the Disintegrin domain. 4 disulfides stabilise this stretch: Cys6–Cys29, Cys20–Cys26, Cys25–Cys50, and Cys38–Cys57. A Cell attachment site motif is present at residues 42–44 (RGD).

The protein belongs to the disintegrin family. Dimeric disintegrin subfamily. As to quaternary structure, heterodimer with subunit alpha; disulfide-linked. Expressed by the venom gland.

The protein localises to the secreted. Functionally, strongly inhibits ADP-induced platelet aggregation on human platelet-rich plasma. Also avidly binds to the laminin-binding beta-1 integrins (alpha-3/beta-1, alpha-6/beta-1, and alpha-7/beta-1) in an RGD-independent manner. The sequence is that of Disintegrin lebein-1-beta from Macrovipera lebetinus (Levantine viper).